A 153-amino-acid chain; its full sequence is Pheromone-binding protein Gp-9 (153 aa).

An N-terminal signal peptide occupies residues 1-19; that stretch reads MKTFVLHIFIFALVAFASA. Cystine bridges form between Cys-37–Cys-77, Cys-73–Cys-129, and Cys-118–Cys-138.

This sequence belongs to the PBP/GOBP family. In terms of assembly, homodimer.

The protein localises to the secreted. Colony queen number, a major feature of social organization, is associated with worker genotype for Gp-9. Colonies are headed by either a single reproductive queen (monogyne form) or multiple queens (polygyne form). Differences in worker Gp-9 genotypes between social forms may cause differences in workers' abilities to recognize queens and regulate their numbers. The protein is Pheromone-binding protein Gp-9 of Solenopsis daguerrei (Workerless parasitic ant).